Reading from the N-terminus, the 456-residue chain is Alcohol acyltransferase 16 (456 aa).

Residues His167 and Asp382 each act as proton acceptor in the active site.

Belongs to the plant acyltransferase family. In terms of tissue distribution, expressed in fruit.

It catalyses the reaction 3-(methylsulfanyl)propanoyl-CoA + butan-1-ol = butyl 3-(methylsulfanyl)propanoate + CoA. It carries out the reaction ethanol + benzoyl-CoA = ethyl benzoate + CoA. The catalysed reaction is butan-1-ol + benzoyl-CoA = butyl benzoate + CoA. The enzyme catalyses 2-(methylsulfanyl)acetyl-CoA + butan-1-ol = butyl 2-(methylsulfanyl)acetate + CoA. In terms of biological role, involved in the biosynthesis of volatile esters which confer kiwifruit flavor. Alcohol acyl transferase that can use a wide range of alcohols as substrate to produce esters. Exhibits benzoyl-CoA:alcohol O-acyltransferase activity. This Actinidia chinensis var. chinensis (Chinese soft-hair kiwi) protein is Alcohol acyltransferase 16.